A 194-amino-acid chain; its full sequence is Alkyl hydroperoxide reductase AhpD (194 aa).

The active-site Proton donor is Cys132. An intrachain disulfide couples Cys132 to Cys135. Cys135 (cysteine sulfenic acid (-SOH) intermediate) is an active-site residue.

Belongs to the AhpD family.

The enzyme catalyses N(6)-[(R)-dihydrolipoyl]-L-lysyl-[lipoyl-carrier protein] + a hydroperoxide = N(6)-[(R)-lipoyl]-L-lysyl-[lipoyl-carrier protein] + an alcohol + H2O. Antioxidant protein with alkyl hydroperoxidase activity. Required for the reduction of the AhpC active site cysteine residues and for the regeneration of the AhpC enzyme activity. This chain is Alkyl hydroperoxide reductase AhpD, found in Koribacter versatilis (strain Ellin345).